Consider the following 180-residue polypeptide: Ubiquitin-conjugating enzyme E2 20 (180 aa).

Positions 1 to 33 (MAAVNGYQGNTPADPPASNGSKQPAAPTKTVDS) are disordered. A UBC core domain is found at 35–180 (SVLKRLQSEL…VEKLYKPPSA (146 aa)). Cysteine 119 serves as the catalytic Glycyl thioester intermediate.

The protein belongs to the ubiquitin-conjugating enzyme family. Expressed in all tissues with cell division activities and in mature leaves.

It catalyses the reaction S-ubiquitinyl-[E1 ubiquitin-activating enzyme]-L-cysteine + [E2 ubiquitin-conjugating enzyme]-L-cysteine = [E1 ubiquitin-activating enzyme]-L-cysteine + S-ubiquitinyl-[E2 ubiquitin-conjugating enzyme]-L-cysteine.. The protein operates within protein modification; protein ubiquitination. In terms of biological role, accepts the ubiquitin from the E1 complex and catalyzes its covalent attachment to other proteins. This chain is Ubiquitin-conjugating enzyme E2 20 (UBC20), found in Arabidopsis thaliana (Mouse-ear cress).